The following is a 127-amino-acid chain: MLKIMLAVFLGGGTGSVLRWWLGLRLNPVHHAIPVGTLTANLAGAFIIGAGLAWFNRMTHLDPMWKLLVTTGLCGGLTTFSTFSAEVVFLLQEGRIGWAGLNVALNLFGSFMMTALAFWLFSSLSVR.

The next 4 membrane-spanning stretches (helical) occupy residues 4–24 (IMLA…WLGL), 35–55 (VGTL…LAWF), 71–91 (TGLC…VFLL), and 101–121 (LNVA…FWLF). Residues Gly75 and Thr78 each contribute to the Na(+) site.

The protein belongs to the fluoride channel Fluc/FEX (TC 1.A.43) family.

The protein resides in the cell inner membrane. It carries out the reaction fluoride(in) = fluoride(out). Its activity is regulated as follows. Na(+) is not transported, but it plays an essential structural role and its presence is essential for fluoride channel function. Functionally, fluoride-specific ion channel. Important for reducing fluoride concentration in the cell, thus reducing its toxicity. This chain is Fluoride-specific ion channel FluC, found in Cronobacter sakazakii (strain ATCC BAA-894) (Enterobacter sakazakii).